The following is a 362-amino-acid chain: MDKVMAQLEGLVAHYEELQEMMADPEVINDTKRYMEISKEEADMREVVQKYRKYKSDIKEIDDNKEIISTESDNDLVEMAKEENSELEKEVAELEDEIKILMLPKDPNDDKDIIMEIRGAAGGDEASLFAGDLLRMYEKYAETQGWKVSLIDSEPTEVGGYKRVAVMITGDKVYSKLKYENGAHRVQRVPVTESQGRVHTSTATVAVMPEYEQVDIDLDPKDIRVDVYRSSGAGGQHINKTSSAVRMTHLPTGIVVAMQDQRSQQQNREKAMQILKSRVYDYYESQNRDQYDAKRKESVGTGDRSERIRTYNYPQNRVTDHRIGLTLNKLDRIMNGELDEIINALVLYYQTQQLEKMAEENA.

Position 236 is an N5-methylglutamine (glutamine 236).

Belongs to the prokaryotic/mitochondrial release factor family. In terms of processing, methylated by PrmC. Methylation increases the termination efficiency of RF1.

The protein resides in the cytoplasm. Its function is as follows. Peptide chain release factor 1 directs the termination of translation in response to the peptide chain termination codons UAG and UAA. The sequence is that of Peptide chain release factor 1 from Lactobacillus johnsonii (strain CNCM I-12250 / La1 / NCC 533).